Consider the following 295-residue polypeptide: Alpha-ketoglutarate-dependent dioxygenase alkB homolog 3 (295 aa).

The segment at 1 to 48 (MGDKRQRARVQGAWATPTKSQSAARPATPARSRPSQTPGPSWRSKEQQ) is disordered. Over residues 22-35 (SAARPATPARSRPS) the composition is skewed to low complexity. Substrate is bound by residues Trp115 and 141-143 (YTY). The Fe2OG dioxygenase domain occupies 172–278 (TFNSLLCNFY…RVNLTFRTVY (107 aa)). Position 177 is a (4R)-5-hydroxyleucine; alternate (Leu177). Leu177 is modified ((4R)-5-oxoleucine; alternate). 179-181 (NFY) contributes to the 2-oxoglutarate binding site. 2 residues coordinate Fe cation: His191 and Asp193. Asp194 contacts substrate. Residue His257 participates in Fe cation binding. 2-oxoglutarate contacts are provided by residues 269 to 275 (RVNLTFR) and Arg275.

It belongs to the alkB family. In terms of assembly, interacts with the ASCC complex composed of ASCC1, ASCC2 and ASCC3. Interacts directly with ASCC3, and is thereby recruited to the ASCC complex. Interacts with OTUD4; the interaction is direct. Interacts with USP7 and USP9X. Requires Fe(2+) as cofactor. In terms of processing, ubiquitinated; undergoes 'Lys-48'-linked polyubiquitination. OTUD4 promotes USP7 and USP9X-dependent deubiquitination of 'Lys-48'-polyubiquitinated ALKBH3 promoting the repair of alkylated DNA lesions.

Its subcellular location is the nucleus. The protein resides in the cytoplasm. The catalysed reaction is an N(1)-methyladenosine in mRNA + 2-oxoglutarate + O2 = an adenosine in mRNA + formaldehyde + succinate + CO2. It catalyses the reaction a methylated nucleobase within DNA + 2-oxoglutarate + O2 = a nucleobase within DNA + formaldehyde + succinate + CO2. The enzyme catalyses an N(1)-methyl-2'-deoxyadenosine in single-stranded DNA + 2-oxoglutarate + O2 = a 2'-deoxyadenosine in single-stranded DNA + formaldehyde + succinate + CO2 + H(+). It carries out the reaction an N(3)-methyl-2'-deoxycytidine in single-stranded DNA + 2-oxoglutarate + O2 = a 2'-deoxycytidine in single-stranded DNA + formaldehyde + succinate + CO2 + H(+). The catalysed reaction is a 3,N(4)-etheno-2'-deoxycytidine in single-stranded DNA + 2-oxoglutarate + O2 + H2O = a 2'-deoxycytidine in single-stranded DNA + glyoxal + succinate + CO2. Activated by ascorbate. In terms of biological role, dioxygenase that mediates demethylation of DNA and RNA containing 1-methyladenosine (m1A). Repairs alkylated DNA containing 1-methyladenosine (m1A) and 3-methylcytosine (m3C) by oxidative demethylation. Has a strong preference for single-stranded DNA. Able to process alkylated m3C within double-stranded regions via its interaction with ASCC3, which promotes DNA unwinding to generate single-stranded substrate needed for ALKBH3. Can repair exocyclic 3,N4-ethenocytosine adducs in single-stranded DNA. Also acts on RNA. Demethylates N(1)-methyladenosine (m1A) RNA, an epigenetic internal modification of messenger RNAs (mRNAs) highly enriched within 5'-untranslated regions (UTRs) and in the vicinity of start codons. Requires molecular oxygen, alpha-ketoglutarate and iron. The chain is Alpha-ketoglutarate-dependent dioxygenase alkB homolog 3 from Rattus norvegicus (Rat).